The sequence spans 237 residues: Phosphatidylserine decarboxylase proenzyme (237 aa).

Catalysis depends on Ser-206, which acts as the Schiff-base intermediate with substrate; via pyruvic acid. Ser-206 carries the post-translational modification Pyruvic acid (Ser); by autocatalysis.

Belongs to the phosphatidylserine decarboxylase family. PSD-A subfamily. Heterodimer of a large membrane-associated beta subunit and a small pyruvoyl-containing alpha subunit. The cofactor is pyruvate. Post-translationally, is synthesized initially as an inactive proenzyme. Formation of the active enzyme involves a self-maturation process in which the active site pyruvoyl group is generated from an internal serine residue via an autocatalytic post-translational modification. Two non-identical subunits are generated from the proenzyme in this reaction, and the pyruvate is formed at the N-terminus of the alpha chain, which is derived from the carboxyl end of the proenzyme. The post-translation cleavage follows an unusual pathway, termed non-hydrolytic serinolysis, in which the side chain hydroxyl group of the serine supplies its oxygen atom to form the C-terminus of the beta chain, while the remainder of the serine residue undergoes an oxidative deamination to produce ammonia and the pyruvoyl prosthetic group on the alpha chain.

Its subcellular location is the cell membrane. It catalyses the reaction a 1,2-diacyl-sn-glycero-3-phospho-L-serine + H(+) = a 1,2-diacyl-sn-glycero-3-phosphoethanolamine + CO2. It participates in phospholipid metabolism; phosphatidylethanolamine biosynthesis; phosphatidylethanolamine from CDP-diacylglycerol: step 2/2. In terms of biological role, catalyzes the formation of phosphatidylethanolamine (PtdEtn) from phosphatidylserine (PtdSer). The chain is Phosphatidylserine decarboxylase proenzyme from Rhodococcus jostii (strain RHA1).